We begin with the raw amino-acid sequence, 346 residues long: Anthranilate phosphoribosyltransferase (346 aa).

5-phospho-alpha-D-ribose 1-diphosphate contacts are provided by residues G88, 91 to 92 (GD), T96, 98 to 101 (NIST), 116 to 124 (KHGNRAVSS), and A128. G88 serves as a coordination point for anthranilate. S100 is a Mg(2+) binding site. N119 provides a ligand contact to anthranilate. R174 is a binding site for anthranilate. Mg(2+) is bound by residues D233 and E234.

The protein belongs to the anthranilate phosphoribosyltransferase family. As to quaternary structure, homodimer. It depends on Mg(2+) as a cofactor.

The catalysed reaction is N-(5-phospho-beta-D-ribosyl)anthranilate + diphosphate = 5-phospho-alpha-D-ribose 1-diphosphate + anthranilate. It participates in amino-acid biosynthesis; L-tryptophan biosynthesis; L-tryptophan from chorismate: step 2/5. Its function is as follows. Catalyzes the transfer of the phosphoribosyl group of 5-phosphorylribose-1-pyrophosphate (PRPP) to anthranilate to yield N-(5'-phosphoribosyl)-anthranilate (PRA). In Paramagnetospirillum magneticum (strain ATCC 700264 / AMB-1) (Magnetospirillum magneticum), this protein is Anthranilate phosphoribosyltransferase.